The following is a 508-amino-acid chain: GMP synthase [glutamine-hydrolyzing] (508 aa).

Residues 1 to 189 enclose the Glutamine amidotransferase type-1 domain; the sequence is MILVLDFGSQ…ALLVCDCEKT (189 aa). Cysteine 78 functions as the Nucleophile in the catalytic mechanism. Catalysis depends on residues histidine 163 and glutamate 165. Residues 190–383 form the GMPS ATP-PPase domain; sequence WGMQHFAQRE…LGISQDFLMR (194 aa). Residue 217-223 coordinates ATP; the sequence is SGGVDST.

As to quaternary structure, homodimer.

It carries out the reaction XMP + L-glutamine + ATP + H2O = GMP + L-glutamate + AMP + diphosphate + 2 H(+). It participates in purine metabolism; GMP biosynthesis; GMP from XMP (L-Gln route): step 1/1. Catalyzes the synthesis of GMP from XMP. The protein is GMP synthase [glutamine-hydrolyzing] of Helicobacter pylori (strain HPAG1).